Here is a 110-residue protein sequence, read N- to C-terminus: Large ribosomal subunit protein uL22 (110 aa).

The protein belongs to the universal ribosomal protein uL22 family. In terms of assembly, part of the 50S ribosomal subunit.

Functionally, this protein binds specifically to 23S rRNA; its binding is stimulated by other ribosomal proteins, e.g. L4, L17, and L20. It is important during the early stages of 50S assembly. It makes multiple contacts with different domains of the 23S rRNA in the assembled 50S subunit and ribosome. The globular domain of the protein is located near the polypeptide exit tunnel on the outside of the subunit, while an extended beta-hairpin is found that lines the wall of the exit tunnel in the center of the 70S ribosome. This is Large ribosomal subunit protein uL22 from Shewanella baltica (strain OS223).